A 224-amino-acid polypeptide reads, in one-letter code: 7-cyano-7-deazaguanine synthase (224 aa).

Leu9 to Leu19 serves as a coordination point for ATP. Zn(2+) contacts are provided by Cys189, Cys199, Cys202, and Cys205.

It belongs to the QueC family. The cofactor is Zn(2+).

The enzyme catalyses 7-carboxy-7-deazaguanine + NH4(+) + ATP = 7-cyano-7-deazaguanine + ADP + phosphate + H2O + H(+). It functions in the pathway purine metabolism; 7-cyano-7-deazaguanine biosynthesis. In terms of biological role, catalyzes the ATP-dependent conversion of 7-carboxy-7-deazaguanine (CDG) to 7-cyano-7-deazaguanine (preQ(0)). In Ralstonia nicotianae (strain ATCC BAA-1114 / GMI1000) (Ralstonia solanacearum), this protein is 7-cyano-7-deazaguanine synthase.